A 225-amino-acid polypeptide reads, in one-letter code: uncharacterized protein (225 aa).

The protein belongs to the mimivirus L31/R44 family.

This is an uncharacterized protein from Acanthamoeba polyphaga (Amoeba).